The chain runs to 761 residues: Ribonucleoside-diphosphate reductase subunit alpha (761 aa).

In terms of domain architecture, ATP-cone spans leucine 5–glycine 95. Residues lysine 9, glutamate 15–lysine 21, threonine 55, and lysine 91 contribute to the ATP site. Residue threonine 209 coordinates GDP. A disulfide bridge links cysteine 225 with cysteine 462. DTTP-binding positions include aspartate 232–leucine 234, arginine 262, and arginine 269. Residue asparagine 437 coordinates GDP. The Proton acceptor role is filled by asparagine 437. The Cysteine radical intermediate role is filled by cysteine 439. Residues glutamate 441 and glutamate 623–serine 625 contribute to the GDP site. The active-site Proton acceptor is the glutamate 441.

This sequence belongs to the ribonucleoside diphosphate reductase large chain family. As to quaternary structure, tetramer of two alpha and two beta subunits.

The catalysed reaction is a 2'-deoxyribonucleoside 5'-diphosphate + [thioredoxin]-disulfide + H2O = a ribonucleoside 5'-diphosphate + [thioredoxin]-dithiol. With respect to regulation, under complex allosteric control mediated by deoxynucleoside triphosphates and ATP binding to separate specificity and activation sites on the alpha subunit. The type of nucleotide bound at the specificity site determines substrate preference. It seems probable that ATP makes the enzyme reduce CDP and UDP, dGTP favors ADP reduction and dTTP favors GDP reduction. Stimulated by ATP and inhibited by dATP binding to the activity site. Functionally, provides the precursors necessary for DNA synthesis. Catalyzes the biosynthesis of deoxyribonucleotides from the corresponding ribonucleotides. The sequence is that of Ribonucleoside-diphosphate reductase subunit alpha (nrdA) from Buchnera aphidicola subsp. Acyrthosiphon pisum (strain APS) (Acyrthosiphon pisum symbiotic bacterium).